A 263-amino-acid polypeptide reads, in one-letter code: MALKHYKNSDSTVFNDAKALFDLNKNILLKGPTGSGKTKLAETLSEVVDTPMHQVNCSVDLDTESLLGFKTIKTNAEGQQEIVFLDGPVIKAMKEGHILYIDEINMAKPETLPVLNGVLDYRRQITNPYTGEVIKAVPGFNVIAAINEGYVGTLPMNEALKNRFVVIHVDYIDGDILKNVIKEQSLLQDDKQIEQIIKFNEDLRTMSKQGQISEEAASIRALLDLCDLITVMPVERAIKRTIIDKLEDEREQQAIYNAVELNF.

An ATP-binding site is contributed by 31 to 38 (GPTGSGKT).

It belongs to the CbbQ/NirQ/NorQ/GpvN family.

This is an uncharacterized protein from Staphylococcus aureus (strain bovine RF122 / ET3-1).